The following is a 78-amino-acid chain: Acyl carrier protein (78 aa).

The 76-residue stretch at 2–77 folds into the Carrier domain; the sequence is DDLFKKIQQL…DAYEFIKSQQ (76 aa). The residue at position 37 (serine 37) is an O-(pantetheine 4'-phosphoryl)serine.

It belongs to the acyl carrier protein (ACP) family. In terms of processing, 4'-phosphopantetheine is transferred from CoA to a specific serine of apo-ACP by AcpS. This modification is essential for activity because fatty acids are bound in thioester linkage to the sulfhydryl of the prosthetic group.

The protein resides in the cytoplasm. It functions in the pathway lipid metabolism; fatty acid biosynthesis. In terms of biological role, carrier of the growing fatty acid chain in fatty acid biosynthesis. This Treponema denticola (strain ATCC 35405 / DSM 14222 / CIP 103919 / JCM 8153 / KCTC 15104) protein is Acyl carrier protein.